The following is a 287-amino-acid chain: Pantothenate synthetase (287 aa).

30–37 (MGNLHSGH) provides a ligand contact to ATP. The active-site Proton donor is the His-37. Position 61 (Gln-61) interacts with (R)-pantoate. Gln-61 serves as a coordination point for beta-alanine. Residue 149–152 (GEKD) participates in ATP binding. Gln-155 provides a ligand contact to (R)-pantoate. ATP is bound by residues Val-178 and 186–189 (LSSR).

It belongs to the pantothenate synthetase family. In terms of assembly, homodimer.

Its subcellular location is the cytoplasm. It catalyses the reaction (R)-pantoate + beta-alanine + ATP = (R)-pantothenate + AMP + diphosphate + H(+). It participates in cofactor biosynthesis; (R)-pantothenate biosynthesis; (R)-pantothenate from (R)-pantoate and beta-alanine: step 1/1. Its function is as follows. Catalyzes the condensation of pantoate with beta-alanine in an ATP-dependent reaction via a pantoyl-adenylate intermediate. The sequence is that of Pantothenate synthetase from Pseudomonas putida (strain W619).